Reading from the N-terminus, the 296-residue chain is Phosphatidylglycerol--prolipoprotein diacylglyceryl transferase (296 aa).

The next 3 membrane-spanning stretches (helical) occupy residues 17-37, 59-79, and 97-117; these read LAVR…IVVG, MMFY…VLFY, and GGMS…LFAW. Arg-142 is an a 1,2-diacyl-sn-glycero-3-phospho-(1'-sn-glycerol) binding site. 2 helical membrane passes run 230–250 and 265–285; these read MGAI…TVEF and LSMG…MMIW.

The protein belongs to the Lgt family.

The protein resides in the cell inner membrane. The enzyme catalyses L-cysteinyl-[prolipoprotein] + a 1,2-diacyl-sn-glycero-3-phospho-(1'-sn-glycerol) = an S-1,2-diacyl-sn-glyceryl-L-cysteinyl-[prolipoprotein] + sn-glycerol 1-phosphate + H(+). Its pathway is protein modification; lipoprotein biosynthesis (diacylglyceryl transfer). Its function is as follows. Catalyzes the transfer of the diacylglyceryl group from phosphatidylglycerol to the sulfhydryl group of the N-terminal cysteine of a prolipoprotein, the first step in the formation of mature lipoproteins. This Burkholderia mallei (strain NCTC 10247) protein is Phosphatidylglycerol--prolipoprotein diacylglyceryl transferase.